The chain runs to 74 residues: Tetrahydromethanopterin S-methyltransferase subunit G (74 aa).

The helical transmembrane segment at 47-67 (VGIAYGLAIGFIFVYVLGTVL) threads the bilayer.

This sequence belongs to the MtrG family. In terms of assembly, the complex is composed of 8 subunits; MtrA, MtrB, MtrC, MtrD, MtrE, MtrF, MtrG and MtrH.

The protein localises to the cell membrane. The enzyme catalyses 5-methyl-5,6,7,8-tetrahydromethanopterin + coenzyme M + 2 Na(+)(in) = 5,6,7,8-tetrahydromethanopterin + methyl-coenzyme M + 2 Na(+)(out). Its pathway is one-carbon metabolism; methanogenesis from CO(2); methyl-coenzyme M from 5,10-methylene-5,6,7,8-tetrahydromethanopterin: step 2/2. In terms of biological role, part of a complex that catalyzes the formation of methyl-coenzyme M and tetrahydromethanopterin from coenzyme M and methyl-tetrahydromethanopterin. This is an energy-conserving, sodium-ion translocating step. The chain is Tetrahydromethanopterin S-methyltransferase subunit G from Methanococcus maripaludis (strain DSM 14266 / JCM 13030 / NBRC 101832 / S2 / LL).